A 259-amino-acid polypeptide reads, in one-letter code: Pro-opiomelanocortin (259 aa).

An N-terminal signal peptide occupies residues 1–22; it reads MLRSVWVYSLGLAVLLQQSGRE. At Q23 the chain carries Pyrrolidone carboxylic acid. Cystine bridges form between C24–C46 and C30–C42. Residues 113 to 142 form a disordered region; the sequence is PQAEEEMEESESSQQQRREDKRSYSMEHFR. Residues 128–142 show a composition bias toward basic and acidic residues; sequence QRREDKRSYSMEHFR. V147 is modified (valine amide).

This sequence belongs to the POMC family. In terms of processing, specific enzymatic cleavages at paired basic residues yield the different active peptides.

The protein localises to the secreted. In terms of biological role, stimulates the adrenal glands to release cortisol. Functionally, anorexigenic peptide. Increases the pigmentation of skin by increasing melanin production in melanocytes. Increases the pigmentation of skin by increasing melanin production in melanocytes. Its function is as follows. Endogenous orexigenic opiate. In terms of biological role, endogenous opiate. The polypeptide is Pro-opiomelanocortin (pomc) (Lepisosteus osseus (Long-nosed gar)).